We begin with the raw amino-acid sequence, 262 residues long: Thiamine thiazole synthase (262 aa).

Residues Ala-36, 55–56 (EK), Gly-63, Val-127, and 154–156 (HVD) contribute to the NAD(+) site. Fe cation is bound by residues Asp-156 and His-171. An NAD(+)-binding site is contributed by Met-224. Arg-234 contributes to the glycine binding site.

Belongs to the THI4 family. In terms of assembly, homooctamer; tetramer of dimers. Requires Fe(2+) as cofactor.

It carries out the reaction hydrogen sulfide + glycine + NAD(+) = ADP-5-ethyl-4-methylthiazole-2-carboxylate + nicotinamide + 3 H2O + H(+). It functions in the pathway cofactor biosynthesis; thiamine diphosphate biosynthesis. Its function is as follows. Involved in the biosynthesis of the thiazole moiety of thiamine. Catalyzes the conversion of NAD and glycine to adenosine diphosphate 5-(2-hydroxyethyl)-4-methylthiazole-2-carboxylate (ADT), an adenylated thiazole intermediate, using free sulfide as a source of sulfur. The sequence is that of Thiamine thiazole synthase from Methanothrix thermoacetophila (strain DSM 6194 / JCM 14653 / NBRC 101360 / PT) (Methanosaeta thermophila).